Reading from the N-terminus, the 220-residue chain is Cytidylate kinase (220 aa).

Position 11-19 (11-19) interacts with ATP; it reads GPTASGKGT.

It belongs to the cytidylate kinase family. Type 1 subfamily.

The protein resides in the cytoplasm. It catalyses the reaction CMP + ATP = CDP + ADP. The catalysed reaction is dCMP + ATP = dCDP + ADP. This chain is Cytidylate kinase, found in Polynucleobacter asymbioticus (strain DSM 18221 / CIP 109841 / QLW-P1DMWA-1) (Polynucleobacter necessarius subsp. asymbioticus).